A 338-amino-acid chain; its full sequence is MAILVTGGAGYIGSHTVVELLNANKDVVVLDNLCNSSPKSLERVAQITGKQVKFYQGDILDTALLQKIFAENQIQSVIHFAGLKAVGESVQKPAEYYMNNVTGSLVLIQEMKKAGVWNFVFSSSATVYGDPEIIPITESCKVGGTTNPYGTSKFMVEQILKDIAKATPEFSITILRYFNPVGAHESGLIGEDPNGIPNNLLPYISQVAIGKLPQLSVFGSDYETHDGTGVRDYIHVVDLAIGHLKALDRHEGDAGLHIYNLGTGSGYSVLDMVKAFEKVNDIKIPYKLVDRRPGDIATCYSDPSLAKTELNWTAARGLEQMMKDTWHWQKKNPKGYRD.

NAD(+)-binding positions include 11-12 (YI), 31-36 (DNLCNS), 58-59 (DI), 80-84 (FAGLK), Asn-99, Ser-124, Tyr-149, Lys-153, and Phe-178. The substrate site is built by Ser-124 and Tyr-149. Catalysis depends on Tyr-149, which acts as the Proton acceptor. Substrate is bound by residues Asn-179, 199–200 (NL), 216–218 (SVF), Arg-231, and 292–295 (RPGD).

Belongs to the NAD(P)-dependent epimerase/dehydratase family. Homodimer. The cofactor is NAD(+).

It carries out the reaction UDP-alpha-D-glucose = UDP-alpha-D-galactose. It functions in the pathway carbohydrate metabolism; galactose metabolism. Involved in the metabolism of galactose. Catalyzes the conversion of UDP-galactose (UDP-Gal) to UDP-glucose (UDP-Glc) through a mechanism involving the transient reduction of NAD. The sequence is that of UDP-glucose 4-epimerase (galE) from Pasteurella multocida (strain Pm70).